The chain runs to 374 residues: Putative G-protein coupled receptor-like protein B0244.6 (374 aa).

Residues 1-54 (MTQNHYTTSIFANCSKHYEFEILLETCTNSTNPCHAVSQIQSAITIAYVDYYTS) lie on the Extracellular side of the membrane. A helical transmembrane segment spans residues 55–75 (VALFSIAALLDIYCLIITIPL). At 76–86 (YRRMKDDSKKK) the chain is on the cytoplasmic side. Residues 87–107 (YVFLITRCISGLLLVVAWLLI) traverse the membrane as a helical segment. Residues 108 to 137 (QCIYLRFIAPSQDNLPYYVLALALNIGSTY) are Extracellular-facing. Residues 138–158 (VLLGSYVGMAGILYLGVLNPI) form a helical membrane-spanning segment. At 159 to 169 (AFNQHLTLRIV) the chain is on the cytoplasmic side. Residues 170 to 190 (YIAVCIIFVISIFISIPLAIF) traverse the membrane as a helical segment. Residues 191–216 (QALMTVPTSSMSCTDTACAPLITLIN) lie on the Extracellular side of the membrane. The helical transmembrane segment at 217-237 (FVLVFGSLITTTLTLTFVLIS) threads the bilayer. Residues 238–262 (LCRHRKEFKKLDTTSNTSLNSAVRL) are Cytoplasmic-facing. The chain crosses the membrane as a helical span at residues 263–283 (LKFTLFAVLLLVAAEVIPFVI). Over 284–304 (SETKKKHSVVTGCYYFYHSGK) the chain is Extracellular. A helical transmembrane segment spans residues 305–325 (VIQYAVFALTESSIWSIALII). Topologically, residues 326-374 (DPLINIIFDRTVSKKATDQVKWMRKSCVGLVRKVTKRSNPENFTETSEI) are cytoplasmic.

It belongs to the G-protein coupled receptor 1 family. B0244 subfamily.

It localises to the cell membrane. The protein is Putative G-protein coupled receptor-like protein B0244.6 of Caenorhabditis elegans.